The primary structure comprises 364 residues: tRNA 2-selenouridine synthase (364 aa).

The region spanning 14 to 137 is the Rhodanese domain; that stretch reads LIADTPIIDV…LRQTAIQATI (124 aa). Catalysis depends on Cys-97, which acts as the S-selanylcysteine intermediate.

It belongs to the SelU family. Monomer.

It carries out the reaction 5-methylaminomethyl-2-thiouridine(34) in tRNA + selenophosphate + (2E)-geranyl diphosphate + H2O + H(+) = 5-methylaminomethyl-2-selenouridine(34) in tRNA + (2E)-thiogeraniol + phosphate + diphosphate. The enzyme catalyses 5-methylaminomethyl-2-thiouridine(34) in tRNA + (2E)-geranyl diphosphate = 5-methylaminomethyl-S-(2E)-geranyl-thiouridine(34) in tRNA + diphosphate. It catalyses the reaction 5-methylaminomethyl-S-(2E)-geranyl-thiouridine(34) in tRNA + selenophosphate + H(+) = 5-methylaminomethyl-2-(Se-phospho)selenouridine(34) in tRNA + (2E)-thiogeraniol. The catalysed reaction is 5-methylaminomethyl-2-(Se-phospho)selenouridine(34) in tRNA + H2O = 5-methylaminomethyl-2-selenouridine(34) in tRNA + phosphate. Involved in the post-transcriptional modification of the uridine at the wobble position (U34) of tRNA(Lys), tRNA(Glu) and tRNA(Gln). Catalyzes the conversion of 2-thiouridine (S2U-RNA) to 2-selenouridine (Se2U-RNA). Acts in a two-step process involving geranylation of 2-thiouridine (S2U) to S-geranyl-2-thiouridine (geS2U) and subsequent selenation of the latter derivative to 2-selenouridine (Se2U) in the tRNA chain. The sequence is that of tRNA 2-selenouridine synthase from Shigella boydii serotype 18 (strain CDC 3083-94 / BS512).